A 415-amino-acid chain; its full sequence is Serine/threonine transporter SstT (415 aa).

9 helical membrane-spanning segments follow: residues 21–41 (ILLGLAAGIILASLSTQAALA), 45–65 (LGTLFVGALKAVAPILVLMLV), 83–103 (ILFLYLIGTFSAALIAVVLSV), 142–162 (ALLNANYIGILVWAVGLGLAF), 193–213 (LGIFGLVASTLAETGFGALWG), 217–237 (LLMVLIGGMLLVALVINPLIV), 299–319 (MAGAAITITVLALAAVHTLGI), 331–351 (VVASICACGASGVAGGSLLLI), and 358–378 (FGISNDIAMQVVAVGFIIGVL).

It belongs to the dicarboxylate/amino acid:cation symporter (DAACS) (TC 2.A.23) family.

It localises to the cell inner membrane. It catalyses the reaction L-serine(in) + Na(+)(in) = L-serine(out) + Na(+)(out). The enzyme catalyses L-threonine(in) + Na(+)(in) = L-threonine(out) + Na(+)(out). Its function is as follows. Involved in the import of serine and threonine into the cell, with the concomitant import of sodium (symport system). This is Serine/threonine transporter SstT from Pectobacterium carotovorum subsp. carotovorum (strain PC1).